We begin with the raw amino-acid sequence, 292 residues long: Enoyl-CoA hydratase domain-containing protein 2, mitochondrial (292 aa).

A mitochondrion-targeting transit peptide spans 1–35; sequence MLRVLCLLRPWRPLRARGCASDGAAGGSEIQVRAL. N6-acetyllysine; alternate is present on Lys-97. Residue Lys-97 is modified to N6-succinyllysine; alternate.

This sequence belongs to the enoyl-CoA hydratase/isomerase family.

It localises to the mitochondrion. The protein is Enoyl-CoA hydratase domain-containing protein 2, mitochondrial (ECHDC2) of Homo sapiens (Human).